The sequence spans 202 residues: MWQERLAQLVTTCHWIGAKGWAPATGGNMSVRQDDTWCWLSESGRDKGSLTTEDFLQVEIATNQAPSGRKPSAETGLHTLVYRLFPEANVVLHVHTVNATVLSRIEKSDTLALQGYEMQKTLSGQHSHLDTVPIAIFDNDQDIDALAARIADYAQTRPLRYGFLLRGHGLTCWGKDIQEARRQLEGLEFLFECELMRRRYEP.

Positions 93 and 95 each coordinate Zn(2+).

The protein belongs to the aldolase class II family. MtnB subfamily. It depends on Zn(2+) as a cofactor.

It catalyses the reaction 5-(methylsulfanyl)-D-ribulose 1-phosphate = 5-methylsulfanyl-2,3-dioxopentyl phosphate + H2O. It functions in the pathway amino-acid biosynthesis; L-methionine biosynthesis via salvage pathway; L-methionine from S-methyl-5-thio-alpha-D-ribose 1-phosphate: step 2/6. Functionally, catalyzes the dehydration of methylthioribulose-1-phosphate (MTRu-1-P) into 2,3-diketo-5-methylthiopentyl-1-phosphate (DK-MTP-1-P). This chain is Methylthioribulose-1-phosphate dehydratase, found in Klebsiella pneumoniae subsp. pneumoniae (strain ATCC 700721 / MGH 78578).